Consider the following 214-residue polypeptide: Orotate phosphoribosyltransferase (214 aa).

Position 26 (Lys26) interacts with 5-phospho-alpha-D-ribose 1-diphosphate. 34 to 35 (FF) lines the orotate pocket. 5-phospho-alpha-D-ribose 1-diphosphate contacts are provided by residues 72 to 73 (YK), Arg99, Lys100, Lys103, His105, and 124 to 132 (DDVITAGTA). Thr128 and Arg157 together coordinate orotate.

This sequence belongs to the purine/pyrimidine phosphoribosyltransferase family. PyrE subfamily. In terms of assembly, homodimer. The cofactor is Mg(2+).

It carries out the reaction orotidine 5'-phosphate + diphosphate = orotate + 5-phospho-alpha-D-ribose 1-diphosphate. The protein operates within pyrimidine metabolism; UMP biosynthesis via de novo pathway; UMP from orotate: step 1/2. In terms of biological role, catalyzes the transfer of a ribosyl phosphate group from 5-phosphoribose 1-diphosphate to orotate, leading to the formation of orotidine monophosphate (OMP). The sequence is that of Orotate phosphoribosyltransferase from Pseudomonas fluorescens (strain Pf0-1).